The primary structure comprises 469 residues: Diaminobutyrate--2-oxoglutarate transaminase (469 aa).

K290 carries the N6-(pyridoxal phosphate)lysine modification.

Belongs to the class-III pyridoxal-phosphate-dependent aminotransferase family. Pyridoxal 5'-phosphate is required as a cofactor.

The protein resides in the cytoplasm. The catalysed reaction is L-2,4-diaminobutanoate + 2-oxoglutarate = L-aspartate 4-semialdehyde + L-glutamate. Involved in the degradation of ectoine, which allows H.elongata to utilize ectoine as both a carbon and a nitrogen source for growth. Probably catalyzes the conversion of L-2,4-diaminobutyrate (DABA) to L-aspartate beta-semialdehyde (ASA) by transamination with 2-oxoglutarate. The protein is Diaminobutyrate--2-oxoglutarate transaminase of Halomonas elongata (strain ATCC 33173 / DSM 2581 / NBRC 15536 / NCIMB 2198 / 1H9).